The following is a 320-amino-acid chain: Pyrroline-5-carboxylate reductase 2 (320 aa).

S2 bears the N-acetylserine mark. NADP(+) contacts are provided by residues 6 to 11 (IGAGQL) and S34. NADPH contacts are provided by A8, Q10, L11, S34, E36, N56, V70, K71, and A97. NADP(+) contacts are provided by residues N56, 69–72 (AVKP), and 95–97 (CAA). E164 is a binding site for L-proline. Residue N230 coordinates NADPH. L-proline-binding residues include A237 and T238. The span at 296-305 (TVSTLTPSSP) shows a compositional bias: low complexity. Positions 296 to 320 (TVSTLTPSSPGKLLTRSLALGGKKD) are disordered. S304 is subject to Phosphoserine.

Belongs to the pyrroline-5-carboxylate reductase family. Homodecamer; composed of 5 homodimers. Interacts with LTO1.

The protein localises to the cytoplasm. It localises to the mitochondrion. The catalysed reaction is L-proline + NADP(+) = (S)-1-pyrroline-5-carboxylate + NADPH + 2 H(+). It catalyses the reaction L-proline + NAD(+) = (S)-1-pyrroline-5-carboxylate + NADH + 2 H(+). It participates in amino-acid biosynthesis; L-proline biosynthesis; L-proline from L-glutamate 5-semialdehyde: step 1/1. Its function is as follows. Oxidoreductase that catalyzes the last step in proline biosynthesis, which corresponds to the reduction of pyrroline-5-carboxylate to L-proline using NAD(P)H. At physiologic concentrations, has higher specific activity in the presence of NADH. Involved in cellular response to oxidative stress. In some cell types, such as erythrocytes, its primary function may be the generation of NADP(+). In Pongo abelii (Sumatran orangutan), this protein is Pyrroline-5-carboxylate reductase 2 (PYCR2).